A 461-amino-acid polypeptide reads, in one-letter code: Serine carboxypeptidase-like 51 (461 aa).

An N-terminal signal peptide occupies residues 1–20; sequence MKTTVVYLVILCLIVSCTNG. N-linked (GlcNAc...) asparagine glycans are attached at residues Asn-99 and Asn-152. Residue Ser-166 is part of the active site. N-linked (GlcNAc...) asparagine glycosylation is present at Asn-340. Active-site residues include Asp-379 and His-438.

The protein belongs to the peptidase S10 family. In terms of tissue distribution, expressed in seedlings, roots, flowers and siliques.

The protein localises to the secreted. In terms of biological role, probable carboxypeptidase. In Arabidopsis thaliana (Mouse-ear cress), this protein is Serine carboxypeptidase-like 51 (SCPL51).